The following is a 178-amino-acid chain: Fatty-acid and retinol-binding protein 1 (178 aa).

Residues 1-16 (MYHQLILMALIGVIMA) form the signal peptide. 2 N-linked (GlcNAc...) asparagine glycosylation sites follow: asparagine 44 and asparagine 75. 2 coiled-coil regions span residues 67 to 89 (DAALEALKNKSDKLYQKAVELRN) and 123 to 154 (KLDMEKIKQAARDIIAKYEALNEETKEELKAT). The N-linked (GlcNAc...) asparagine glycan is linked to asparagine 157.

It belongs to the fatty-acid and retinol-binding protein (FARBP) family. N-glycosylated.

The protein resides in the secreted. In terms of biological role, binds retinol and different fatty acids. This chain is Fatty-acid and retinol-binding protein 1, found in Onchocerca gutturosa.